The following is an 873-amino-acid chain: Bifunctional uridylyltransferase/uridylyl-removing enzyme (873 aa).

The segment at 1 to 332 (MAFQSPLTFN…NGGETEPAVI (332 aa)) is uridylyltransferase. Positions 333-692 (INEDFQRRGR…MSKKATRGGT (360 aa)) are uridylyl-removing. An HD domain is found at 451–573 (VDEHSVRLLN…VRDEERLEYL (123 aa)). ACT domains are found at residues 693–773 (EVFV…VKTR) and 800–873 (LMEL…ELAP).

This sequence belongs to the GlnD family. Mg(2+) is required as a cofactor.

It catalyses the reaction [protein-PII]-L-tyrosine + UTP = [protein-PII]-uridylyl-L-tyrosine + diphosphate. It carries out the reaction [protein-PII]-uridylyl-L-tyrosine + H2O = [protein-PII]-L-tyrosine + UMP + H(+). Uridylyltransferase (UTase) activity is inhibited by glutamine, while glutamine activates uridylyl-removing (UR) activity. Functionally, modifies, by uridylylation and deuridylylation, the PII regulatory proteins (GlnB and homologs), in response to the nitrogen status of the cell that GlnD senses through the glutamine level. Under low glutamine levels, catalyzes the conversion of the PII proteins and UTP to PII-UMP and PPi, while under higher glutamine levels, GlnD hydrolyzes PII-UMP to PII and UMP (deuridylylation). Thus, controls uridylylation state and activity of the PII proteins, and plays an important role in the regulation of nitrogen assimilation and metabolism. The chain is Bifunctional uridylyltransferase/uridylyl-removing enzyme from Vibrio vulnificus (strain CMCP6).